We begin with the raw amino-acid sequence, 158 residues long: Toxin Tse2 (158 aa).

As to quaternary structure, forms a heterotetramer with Tsi2 consisting of two Tse2 dimers and two Tsi2 dimers. Formation of the complex inactivates Tse2 enzymatic activity.

It is found in the secreted. In terms of biological role, toxin secreted by the H1 type VI (H1-T6SS) secretion system into the cytoplasm of recipient cells. Acts likely as a NAD-dependent cytotoxin towards both prokaryotic and eukaryotic cells. The sequence is that of Toxin Tse2 from Pseudomonas aeruginosa (strain ATCC 15692 / DSM 22644 / CIP 104116 / JCM 14847 / LMG 12228 / 1C / PRS 101 / PAO1).